The primary structure comprises 412 residues: Histidine--tRNA ligase (412 aa).

The protein belongs to the class-II aminoacyl-tRNA synthetase family. Homodimer.

The protein localises to the cytoplasm. It catalyses the reaction tRNA(His) + L-histidine + ATP = L-histidyl-tRNA(His) + AMP + diphosphate + H(+). The chain is Histidine--tRNA ligase from Maridesulfovibrio salexigens (strain ATCC 14822 / DSM 2638 / NCIMB 8403 / VKM B-1763) (Desulfovibrio salexigens).